The following is a 98-amino-acid chain: Keratin-associated protein 3-3 (98 aa).

The residue at position 2 (Ala2) is an N-acetylalanine. Repeat copies occupy residues 3 to 7 (CCAPL), 8 to 12 (CCSAR), and 47 to 51 (CCDNC). Positions 3 to 59 (CCAPLCCSARTSPATTICSSDKFCRCGVCLPSTCPHTVWLLEPTCCDNCPPPCHIPQ) are 3 X 5 AA repeats of C-C-X(3).

The protein belongs to the KRTAP type 3 family. As to quaternary structure, interacts with hair keratins.

Functionally, in the hair cortex, hair keratin intermediate filaments are embedded in an interfilamentous matrix, consisting of hair keratin-associated proteins (KRTAP), which are essential for the formation of a rigid and resistant hair shaft through their extensive disulfide bond cross-linking with abundant cysteine residues of hair keratins. The matrix proteins include the high-sulfur and high-glycine-tyrosine keratins. This is Keratin-associated protein 3-3 from Bos taurus (Bovine).